Consider the following 162-residue polypeptide: MENTEVKVGIADLNLVSSPGKIMTIGLGSCIGIALYDRRSKLAGLSHIMLPDSTQFKNVTNPMKFADLAIPLLIKKMEAKGCLKRNLIAKIAGGASMFSFSDKSMVGDIGKRNIQAVKKSLSEERIQIIAEDVGGNKGRTMILDALDGKVTLKIVGIGIVEL.

The protein belongs to the CheD family.

The enzyme catalyses L-glutaminyl-[protein] + H2O = L-glutamyl-[protein] + NH4(+). Its function is as follows. Probably deamidates glutamine residues to glutamate on methyl-accepting chemotaxis receptors (MCPs), playing an important role in chemotaxis. The protein is Probable chemoreceptor glutamine deamidase CheD of Clostridium botulinum (strain Alaska E43 / Type E3).